The following is a 412-amino-acid chain: Serine hydroxymethyltransferase (412 aa).

(6S)-5,6,7,8-tetrahydrofolate-binding positions include L120 and 124 to 126 (GHL). Residue K229 is modified to N6-(pyridoxal phosphate)lysine. Position 352 to 354 (352 to 354 (SPF)) interacts with (6S)-5,6,7,8-tetrahydrofolate.

The protein belongs to the SHMT family. In terms of assembly, homodimer. Pyridoxal 5'-phosphate is required as a cofactor.

The protein localises to the cytoplasm. The enzyme catalyses (6R)-5,10-methylene-5,6,7,8-tetrahydrofolate + glycine + H2O = (6S)-5,6,7,8-tetrahydrofolate + L-serine. It functions in the pathway one-carbon metabolism; tetrahydrofolate interconversion. The protein operates within amino-acid biosynthesis; glycine biosynthesis; glycine from L-serine: step 1/1. In terms of biological role, catalyzes the reversible interconversion of serine and glycine with tetrahydrofolate (THF) serving as the one-carbon carrier. This reaction serves as the major source of one-carbon groups required for the biosynthesis of purines, thymidylate, methionine, and other important biomolecules. Also exhibits THF-independent aldolase activity toward beta-hydroxyamino acids, producing glycine and aldehydes, via a retro-aldol mechanism. The polypeptide is Serine hydroxymethyltransferase (Acetivibrio thermocellus (strain ATCC 27405 / DSM 1237 / JCM 9322 / NBRC 103400 / NCIMB 10682 / NRRL B-4536 / VPI 7372) (Clostridium thermocellum)).